We begin with the raw amino-acid sequence, 243 residues long: Glutathione S-transferase U14 (243 aa).

The region spanning 5–87 (DTVKLIGCSD…YLDEAWPSDP (83 aa)) is the GST N-terminal domain. Residues 15–16 (DP), 44–45 (EK), 58–59 (KT), and 71–72 (ES) each bind glutathione. A GST C-terminal domain is found at 93-220 (NAYDRASARF…MPTVEEVTEL (128 aa)). The residue at position 159 (threonine 159) is a Phosphothreonine.

The protein belongs to the GST superfamily. Tau family.

Its subcellular location is the cytoplasm. It is found in the cytosol. The enzyme catalyses RX + glutathione = an S-substituted glutathione + a halide anion + H(+). Functionally, may be involved in the conjugation of reduced glutathione to a wide number of exogenous and endogenous hydrophobic electrophiles and have a detoxification role against certain herbicides. The sequence is that of Glutathione S-transferase U14 (GSTU14) from Arabidopsis thaliana (Mouse-ear cress).